Consider the following 174-residue polypeptide: NADH-quinone oxidoreductase subunit I (174 aa).

2 4Fe-4S ferredoxin-type domains span residues 61-91 and 103-132; these read LTVK…ITAA and ISYE…LGPE. 8 residues coordinate [4Fe-4S] cluster: C71, C74, C77, C81, C112, C115, C118, and C122.

It belongs to the complex I 23 kDa subunit family. NDH-1 is composed of 14 different subunits. Subunits NuoA, H, J, K, L, M, N constitute the membrane sector of the complex. The cofactor is [4Fe-4S] cluster.

Its subcellular location is the cell inner membrane. The enzyme catalyses a quinone + NADH + 5 H(+)(in) = a quinol + NAD(+) + 4 H(+)(out). NDH-1 shuttles electrons from NADH, via FMN and iron-sulfur (Fe-S) centers, to quinones in the respiratory chain. The immediate electron acceptor for the enzyme in this species is believed to be ubiquinone. Couples the redox reaction to proton translocation (for every two electrons transferred, four hydrogen ions are translocated across the cytoplasmic membrane), and thus conserves the redox energy in a proton gradient. In Bdellovibrio bacteriovorus (strain ATCC 15356 / DSM 50701 / NCIMB 9529 / HD100), this protein is NADH-quinone oxidoreductase subunit I.